Consider the following 79-residue polypeptide: Protein RALF-like 15 (79 aa).

The signal sequence occupies residues 1–28 (MGMSKSIKVIVSLALILFLALAATKVEA). Disulfide bonds link C46–C54 and C66–C72.

This sequence belongs to the plant rapid alkalinization factor (RALF) family.

It is found in the secreted. In terms of biological role, cell signaling peptide that may regulate plant stress, growth, and development. Mediates a rapid alkalinization of extracellular space by mediating a transient increase in the cytoplasmic Ca(2+) concentration leading to a calcium-dependent signaling events through a cell surface receptor and a concomitant activation of some intracellular mitogen-activated protein kinases. This is Protein RALF-like 15 (RALFL15) from Arabidopsis thaliana (Mouse-ear cress).